The primary structure comprises 478 residues: Probable cytosolic Fe-S cluster assembly factor AGAP009023 (478 aa).

[4Fe-4S] cluster contacts are provided by C23, C69, C72, C75, C189, C245, C396, and C400.

Belongs to the NARF family.

Component of the cytosolic iron-sulfur (Fe/S) protein assembly machinery. Required for maturation of extramitochondrial Fe/S proteins. The chain is Probable cytosolic Fe-S cluster assembly factor AGAP009023 from Anopheles gambiae (African malaria mosquito).